We begin with the raw amino-acid sequence, 31 residues long: Cytochrome b6-f complex subunit 6 (31 aa).

Residues I3–F23 form a helical membrane-spanning segment.

This sequence belongs to the PetL family. As to quaternary structure, the 4 large subunits of the cytochrome b6-f complex are cytochrome b6, subunit IV (17 kDa polypeptide, PetD), cytochrome f and the Rieske protein, while the 4 small subunits are PetG, PetL, PetM and PetN. The complex functions as a dimer.

It is found in the plastid. It localises to the chloroplast thylakoid membrane. Functionally, component of the cytochrome b6-f complex, which mediates electron transfer between photosystem II (PSII) and photosystem I (PSI), cyclic electron flow around PSI, and state transitions. PetL is important for photoautotrophic growth as well as for electron transfer efficiency and stability of the cytochrome b6-f complex. The chain is Cytochrome b6-f complex subunit 6 from Rhodomonas salina (Cryptomonas salina).